Here is a 138-residue protein sequence, read N- to C-terminus: Biopolymer transport protein exbD1 (138 aa).

Residues 1–16 are Cytoplasmic-facing; it reads MIKSSAKHNDFGLTPD. The chain crosses the membrane as a helical span at residues 17-37; sequence LTPLLDIIFIVMVFLLLTASV. At 38-138 the chain is on the periplasmic side; the sequence is RLESLEVALP…TQLLTEPSHS (101 aa).

The protein belongs to the ExbD/TolR family. As to quaternary structure, the accessory proteins ExbB and ExbD seem to form a complex with TonB.

Its subcellular location is the cell inner membrane. In terms of biological role, involved in the TonB-dependent energy-dependent transport of various receptor-bound substrates. The protein is Biopolymer transport protein exbD1 (exbD1) of Vibrio cholerae serotype O1 (strain ATCC 39315 / El Tor Inaba N16961).